A 431-amino-acid chain; its full sequence is Histidinol dehydrogenase (431 aa).

NAD(+)-binding residues include Y124, Q187, and N210. Substrate contacts are provided by S236, Q258, and H261. Residues Q258 and H261 each coordinate Zn(2+). Residues E325 and H326 each act as proton acceptor in the active site. Substrate contacts are provided by H326, D359, E413, and H418. D359 contacts Zn(2+). H418 is a binding site for Zn(2+).

The protein belongs to the histidinol dehydrogenase family. Requires Zn(2+) as cofactor.

It catalyses the reaction L-histidinol + 2 NAD(+) + H2O = L-histidine + 2 NADH + 3 H(+). It participates in amino-acid biosynthesis; L-histidine biosynthesis; L-histidine from 5-phospho-alpha-D-ribose 1-diphosphate: step 9/9. Catalyzes the sequential NAD-dependent oxidations of L-histidinol to L-histidinaldehyde and then to L-histidine. This chain is Histidinol dehydrogenase, found in Legionella pneumophila (strain Lens).